A 293-amino-acid polypeptide reads, in one-letter code: GDT1-like protein 3 (293 aa).

A signal peptide spans Met-1–Gly-25. The next 6 helical transmembrane spans lie at Phe-89–Ala-109, Ala-115–Leu-135, Thr-148–Trp-168, Leu-200–Glu-220, Ala-238–Val-258, and Val-272–Pro-292.

This sequence belongs to the GDT1 family.

The protein localises to the membrane. The sequence is that of GDT1-like protein 3 from Arabidopsis thaliana (Mouse-ear cress).